The primary structure comprises 290 residues: MTARILDGNALSARVRGELAERAAALADGGVQPCLAVILVGVNPASAVYVRNKVAACEKAGIRSLRFDFAADVDAAEVMAKIAELNADSAVHGVLVQLPLPKQFNEAEVLEAIRVEKDVDGFHAENVGRLSQGQEAFLPCTPHGVMKMLEAGGVPVQGAEAVVIGRSNIVGKPMAMLLTNAGATVTVTHSKTRDLAFHTRRADILVAAIGKPRFVTGDMIKPGAVVIDVGINRLTEGPDAGKLCGDVDFESAKEVASLITPVPGGVGPMTITMLLANTVESAERVARSKG.

NADP(+) contacts are provided by residues 165–167 (GRS), Ser190, and Ile231.

It belongs to the tetrahydrofolate dehydrogenase/cyclohydrolase family. In terms of assembly, homodimer.

The enzyme catalyses (6R)-5,10-methylene-5,6,7,8-tetrahydrofolate + NADP(+) = (6R)-5,10-methenyltetrahydrofolate + NADPH. It catalyses the reaction (6R)-5,10-methenyltetrahydrofolate + H2O = (6R)-10-formyltetrahydrofolate + H(+). It participates in one-carbon metabolism; tetrahydrofolate interconversion. Its function is as follows. Catalyzes the oxidation of 5,10-methylenetetrahydrofolate to 5,10-methenyltetrahydrofolate and then the hydrolysis of 5,10-methenyltetrahydrofolate to 10-formyltetrahydrofolate. This chain is Bifunctional protein FolD, found in Aromatoleum aromaticum (strain DSM 19018 / LMG 30748 / EbN1) (Azoarcus sp. (strain EbN1)).